A 343-amino-acid polypeptide reads, in one-letter code: Aspartate carbamoyltransferase catalytic subunit (343 aa).

Carbamoyl phosphate-binding residues include Arg-71 and Thr-72. Lys-99 is a binding site for L-aspartate. Arg-121, His-149, and Gln-152 together coordinate carbamoyl phosphate. Arg-195 and Arg-249 together coordinate L-aspartate. Carbamoyl phosphate-binding residues include Gly-290 and Pro-291.

The protein belongs to the aspartate/ornithine carbamoyltransferase superfamily. ATCase family. Heterododecamer (2C3:3R2) of six catalytic PyrB chains organized as two trimers (C3), and six regulatory PyrI chains organized as three dimers (R2).

The enzyme catalyses carbamoyl phosphate + L-aspartate = N-carbamoyl-L-aspartate + phosphate + H(+). It functions in the pathway pyrimidine metabolism; UMP biosynthesis via de novo pathway; (S)-dihydroorotate from bicarbonate: step 2/3. Functionally, catalyzes the condensation of carbamoyl phosphate and aspartate to form carbamoyl aspartate and inorganic phosphate, the committed step in the de novo pyrimidine nucleotide biosynthesis pathway. The chain is Aspartate carbamoyltransferase catalytic subunit from Rhodopirellula baltica (strain DSM 10527 / NCIMB 13988 / SH1).